A 144-amino-acid chain; its full sequence is Eukaryotic translation initiation factor 1A, Y-chromosomal (144 aa).

The span at 1 to 15 shows a compositional bias: basic residues; the sequence is MPKNKGKGGKNRRRG. A disordered region spans residues 1-26; sequence MPKNKGKGGKNRRRGKNENESEKREL. Over residues 16 to 26 the composition is skewed to basic and acidic residues; the sequence is KNENESEKREL. The S1-like domain occupies 22 to 96; that stretch reads EKRELVFKED…NKADVILKYN (75 aa). Lys88 participates in a covalent cross-link: Glycyl lysine isopeptide (Lys-Gly) (interchain with G-Cter in ubiquitin). Positions 114–144 are disordered; the sequence is KINETDTFGPGDDDEIQFDDIGDDDEDIDDI. Over residues 124–144 the composition is skewed to acidic residues; it reads GDDDEIQFDDIGDDDEDIDDI.

Belongs to the eIF-1A family. In terms of assembly, component of the 43S pre-initiation complex (43S PIC), which is composed of the 40S ribosomal subunit, EIF1, eIF1A (EIF1AX), eIF3 complex, EIF5 and eIF2-GTP-initiator tRNA complex (eIF2 ternary complex). Interacts with EIF5; this interaction contributes to the maintenance of EIF1 within the open 43S PIC. Interacts through its C-terminal domain (CTD) with the CTD of EIF5B; from the location of the start codon by the 43S complex until the formation of the 80S complex. As to expression, ubiquitous.

The protein localises to the cytoplasm. Its function is as follows. Component of the 43S pre-initiation complex (43S PIC), which binds to the mRNA cap-proximal region, scans mRNA 5'-untranslated region, and locates the initiation codon. This protein enhances formation of the cap-proximal complex. Together with EIF1, facilitates scanning, start codon recognition, promotion of the assembly of 48S complex at the initiation codon (43S PIC becomes 48S PIC after the start codon is reached), and dissociation of aberrant complexes. After start codon location, together with EIF5B orients the initiator methionine-tRNA in a conformation that allows 60S ribosomal subunit joining to form the 80S initiation complex. Is released after 80S initiation complex formation, just after GTP hydrolysis by EIF5B, and before release of EIF5B. Its globular part is located in the A site of the 40S ribosomal subunit. Its interaction with EIF5 during scanning contribute to the maintenance of EIF1 within the open 43S PIC. In contrast to yeast orthologs, does not bind EIF1. This Homo sapiens (Human) protein is Eukaryotic translation initiation factor 1A, Y-chromosomal (EIF1AY).